The sequence spans 694 residues: Long-chain-fatty-acid--CoA ligase 3 (694 aa).

The tract at residues 1–25 is disordered; it reads MSEQHSVAVGKAANEHETAPRRNVR. An N-acetylserine modification is found at Ser-2. 269-280 contacts ATP; it reads YTSGSISAPKGV. Positions 527–576 match the FACS motif; the sequence is DGWFRTGDIVEWTPKGQLKIIDRRKNLVKTLNGEYIALEKLESVYRSNSY.

This sequence belongs to the ATP-dependent AMP-binding enzyme family. In terms of assembly, interacts with FRK1. The cofactor is Mg(2+).

It is found in the cell membrane. It catalyses the reaction a long-chain fatty acid + ATP + CoA = a long-chain fatty acyl-CoA + AMP + diphosphate. It carries out the reaction (9Z)-octadecenoate + ATP + CoA = (9Z)-octadecenoyl-CoA + AMP + diphosphate. The enzyme catalyses hexadecanoate + ATP + CoA = hexadecanoyl-CoA + AMP + diphosphate. The catalysed reaction is (9Z)-hexadecenoate + ATP + CoA = (9Z)-hexadecenoyl-CoA + AMP + diphosphate. It catalyses the reaction (9Z)-tetradecenoate + ATP + CoA = (9Z)-tetradecenoyl-CoA + AMP + diphosphate. It carries out the reaction (9Z,12Z)-octadecadienoate + ATP + CoA = (9Z,12Z)-octadecadienoyl-CoA + AMP + diphosphate. Activates endogenous long-chain fatty acids (LCFA) by esterification of the fatty acids into metabolically active CoA-thioesters for subsequent degradation or incorporation into phospholipids. Acts preferentially on C16 and C18 fatty acids with a cis-double bond at C-9-C-10. The sequence is that of Long-chain-fatty-acid--CoA ligase 3 (FAA3) from Saccharomyces cerevisiae (strain ATCC 204508 / S288c) (Baker's yeast).